We begin with the raw amino-acid sequence, 1237 residues long: Phosphorylase b kinase regulatory subunit alpha, skeletal muscle isoform (1237 aa).

4 positions are modified to phosphoserine: serine 629, serine 729, serine 735, and serine 758. The interval 810-840 is calmodulin-binding; sequence LTELYGKVGKIRHWGLIRYISGILRKKVEAL. The residue at position 972 (serine 972) is a Phosphoserine; by autocatalysis. Serine 981 bears the Phosphoserine mark. 2 positions are modified to phosphoserine; by autocatalysis: serine 985 and serine 1007. Phosphoserine; by PKA is present on serine 1018. Phosphoserine is present on residues serine 1020, serine 1023, and serine 1030. Positions 1021-1069 are disordered; the sequence is TESQPNGGHSLGADLMSPSFLSPGTSVTPSSGSFPGHHTSKDSRQGQWQ. Residues 1042-1056 are compositionally biased toward low complexity; that stretch reads SPGTSVTPSSGSFPG. A calmodulin-binding region spans residues 1060-1100; sequence SKDSRQGQWQRRRRLDGALNRVPIGFYQKVWKVLQKCHGLS. Serine 1127 is modified (phosphoserine). Cysteine 1234 carries the S-farnesyl cysteine lipid modification.

Belongs to the phosphorylase b kinase regulatory chain family. In terms of assembly, hexadecamer of 4 heterotetramers, each composed of alpha, beta, gamma, and delta subunits. Alpha (PHKA1 or PHKA2) and beta (PHKB) are regulatory subunits, gamma (PHKG1 or PHKG2) is the catalytic subunit, and delta is calmodulin. Phosphorylation of Ser-1018 by PKA stimulates the dephosphorylation of the beta subunit and, thus, reverses the initial stimulation of PHK by the faster beta-subunit phosphorylation by PKA, that occurs in muscle in response to adrenaline. In terms of processing, cys-1234 is farnesylated, but the C-terminal tripeptide is not removed and the cysteine carboxyl is not methylated. Isoform 1 predominates in muscle, heart, brain and testis. Isoforms 1 and 2 are expressed in similar quantities in the other tissues. Isoform 3 is highly expressed in slow muscle and heart.

It localises to the cell membrane. It functions in the pathway glycan biosynthesis; glycogen metabolism. Its activity is regulated as follows. By phosphorylation of various serine residues and by calcium. Phosphorylase b kinase catalyzes the phosphorylation of serine in certain substrates, including troponin I. The alpha chain may bind calmodulin. This Oryctolagus cuniculus (Rabbit) protein is Phosphorylase b kinase regulatory subunit alpha, skeletal muscle isoform (PHKA1).